A 368-amino-acid chain; its full sequence is tRNA-specific 2-thiouridylase MnmA (368 aa).

Residues 11 to 18 (GMSGGVDS) and methionine 37 each bind ATP. An interaction with target base in tRNA region spans residues 97–99 (NPD). Cysteine 102 serves as the catalytic Nucleophile. The cysteines at positions 102 and 199 are disulfide-linked. Glycine 127 provides a ligand contact to ATP. The interval 149 to 151 (KDQ) is interaction with tRNA. Residue cysteine 199 is the Cysteine persulfide intermediate of the active site. Positions 311–312 (RY) are interaction with tRNA.

It belongs to the MnmA/TRMU family. Interacts with TusE.

The protein resides in the cytoplasm. The enzyme catalyses S-sulfanyl-L-cysteinyl-[protein] + uridine(34) in tRNA + AH2 + ATP = 2-thiouridine(34) in tRNA + L-cysteinyl-[protein] + A + AMP + diphosphate + H(+). Its function is as follows. Catalyzes the 2-thiolation of uridine at the wobble position (U34) of tRNA(Lys), tRNA(Glu) and tRNA(Gln), leading to the formation of s(2)U34, the first step of tRNA-mnm(5)s(2)U34 synthesis. Sulfur is provided by IscS, via a sulfur-relay system. Binds ATP and its substrate tRNAs. This is tRNA-specific 2-thiouridylase MnmA from Escherichia coli O6:H1 (strain CFT073 / ATCC 700928 / UPEC).